The following is a 294-amino-acid chain: 33 kDa chaperonin (294 aa).

Disulfide bonds link cysteine 238/cysteine 240 and cysteine 271/cysteine 274.

Belongs to the HSP33 family. In terms of processing, under oxidizing conditions two disulfide bonds are formed involving the reactive cysteines. Under reducing conditions zinc is bound to the reactive cysteines and the protein is inactive.

The protein resides in the cytoplasm. Its function is as follows. Redox regulated molecular chaperone. Protects both thermally unfolding and oxidatively damaged proteins from irreversible aggregation. Plays an important role in the bacterial defense system toward oxidative stress. This Staphylococcus carnosus (strain TM300) protein is 33 kDa chaperonin.